The primary structure comprises 138 residues: Basic phospholipase A2 Bs-N6 (138 aa).

The signal sequence occupies residues 1–16 (MRTLWIVAVLLVGVEG). 7 disulfides stabilise this stretch: cysteine 42–cysteine 131, cysteine 44–cysteine 60, cysteine 59–cysteine 111, cysteine 65–cysteine 138, cysteine 66–cysteine 104, cysteine 73–cysteine 97, and cysteine 91–cysteine 102. Residues tyrosine 43, glycine 45, and glycine 47 each contribute to the Ca(2+) site. Histidine 63 is an active-site residue. Aspartate 64 is a binding site for Ca(2+). Aspartate 105 is a catalytic residue.

In terms of assembly, monomer. It depends on Ca(2+) as a cofactor. Post-translationally, contains 7 disulfide bonds. In terms of tissue distribution, expressed by the venom gland.

It localises to the secreted. The enzyme catalyses a 1,2-diacyl-sn-glycero-3-phosphocholine + H2O = a 1-acyl-sn-glycero-3-phosphocholine + a fatty acid + H(+). Its function is as follows. Snake venom phospholipase A2 (PLA2) that shows myotoxic activities. PLA2 catalyzes the calcium-dependent hydrolysis of the 2-acyl groups in 3-sn-phosphoglycerides. The chain is Basic phospholipase A2 Bs-N6 from Bothriechis schlegelii (Eyelash palm pitviper).